We begin with the raw amino-acid sequence, 124 residues long: Small ribosomal subunit protein uS12 (124 aa).

The disordered stretch occupies residues 1 to 32; it reads MPTISQLIRHGRQKQKKRTKSPALKSSPQRRG. Basic residues predominate over residues 9–20; it reads RHGRQKQKKRTK. Aspartate 89 is modified (3-methylthioaspartic acid).

It belongs to the universal ribosomal protein uS12 family. Part of the 30S ribosomal subunit. Contacts proteins S8 and S17. May interact with IF1 in the 30S initiation complex.

Its function is as follows. With S4 and S5 plays an important role in translational accuracy. In terms of biological role, interacts with and stabilizes bases of the 16S rRNA that are involved in tRNA selection in the A site and with the mRNA backbone. Located at the interface of the 30S and 50S subunits, it traverses the body of the 30S subunit contacting proteins on the other side and probably holding the rRNA structure together. The combined cluster of proteins S8, S12 and S17 appears to hold together the shoulder and platform of the 30S subunit. This is Small ribosomal subunit protein uS12 from Leptospira borgpetersenii serovar Hardjo-bovis (strain JB197).